Consider the following 420-residue polypeptide: Mitochondrial chaperone BCS1 (420 aa).

Residues 1–15 (MTLSDFIGALKDNPY) are Mitochondrial intermembrane-facing. A helical membrane pass occupies residues 16–32 (FGAGFGLVGVGTALAVA). Residues 33-420 (RKGAQVGMIF…AIKNIAEIKD (388 aa)) lie on the Mitochondrial matrix side of the membrane. Position 230–237 (230–237 (GPPGCGKS)) interacts with ATP.

This sequence belongs to the AAA ATPase family. BCS1 subfamily.

It is found in the mitochondrion inner membrane. It catalyses the reaction ATP + H2O = ADP + phosphate + H(+). Functionally, chaperone necessary for the incorporation of Rieske iron-sulfur protein uqcrfs1 into the mitochondrial respiratory chain complex III. The protein is Mitochondrial chaperone BCS1 (bcs1l) of Danio rerio (Zebrafish).